The primary structure comprises 463 residues: Bifunctional protein GlmU (463 aa).

A pyrophosphorylase region spans residues 1-228 (MEQALSIVVL…PAEVQGVNDR (228 aa)). UDP-N-acetyl-alpha-D-glucosamine contacts are provided by residues 10-13 (LAAG), K24, Q75, 80-81 (GT), 102-104 (YGD), G138, E153, N168, and N226. Mg(2+) is bound at residue D104. N226 is a binding site for Mg(2+). Residues 229-249 (VQLAAAERVWQRRQAEDWMRA) are linker. Residues 250–463 (GVTILDPDRF…RPDRGEGSDA (214 aa)) are N-acetyltransferase. UDP-N-acetyl-alpha-D-glucosamine contacts are provided by R332 and K350. The active-site Proton acceptor is the H362. The UDP-N-acetyl-alpha-D-glucosamine site is built by Y365 and N376. Acetyl-CoA contacts are provided by residues A379, 385–386 (NY), S404, A422, and R439. The disordered stretch occupies residues 437–463 (VARSAQRSIHGWRRPGQRPDRGEGSDA). Over residues 453-463 (QRPDRGEGSDA) the composition is skewed to basic and acidic residues.

It in the N-terminal section; belongs to the N-acetylglucosamine-1-phosphate uridyltransferase family. This sequence in the C-terminal section; belongs to the transferase hexapeptide repeat family. As to quaternary structure, homotrimer. The cofactor is Mg(2+).

Its subcellular location is the cytoplasm. It carries out the reaction alpha-D-glucosamine 1-phosphate + acetyl-CoA = N-acetyl-alpha-D-glucosamine 1-phosphate + CoA + H(+). The catalysed reaction is N-acetyl-alpha-D-glucosamine 1-phosphate + UTP + H(+) = UDP-N-acetyl-alpha-D-glucosamine + diphosphate. It participates in nucleotide-sugar biosynthesis; UDP-N-acetyl-alpha-D-glucosamine biosynthesis; N-acetyl-alpha-D-glucosamine 1-phosphate from alpha-D-glucosamine 6-phosphate (route II): step 2/2. Its pathway is nucleotide-sugar biosynthesis; UDP-N-acetyl-alpha-D-glucosamine biosynthesis; UDP-N-acetyl-alpha-D-glucosamine from N-acetyl-alpha-D-glucosamine 1-phosphate: step 1/1. It functions in the pathway bacterial outer membrane biogenesis; LPS lipid A biosynthesis. In terms of biological role, catalyzes the last two sequential reactions in the de novo biosynthetic pathway for UDP-N-acetylglucosamine (UDP-GlcNAc). The C-terminal domain catalyzes the transfer of acetyl group from acetyl coenzyme A to glucosamine-1-phosphate (GlcN-1-P) to produce N-acetylglucosamine-1-phosphate (GlcNAc-1-P), which is converted into UDP-GlcNAc by the transfer of uridine 5-monophosphate (from uridine 5-triphosphate), a reaction catalyzed by the N-terminal domain. The protein is Bifunctional protein GlmU of Alkalilimnicola ehrlichii (strain ATCC BAA-1101 / DSM 17681 / MLHE-1).